The chain runs to 1148 residues: Replication factor C subunit 1 (1148 aa).

The span at 46-56 (NSSRKEDDFKQ) shows a compositional bias: basic and acidic residues. 2 disordered regions span residues 46–201 (NSSR…LNDE) and 228–380 (TLAM…TNYQ). Lysine 50 participates in a covalent cross-link: Glycyl lysine isopeptide (Lys-Gly) (interchain with G-Cter in SUMO2). A Phosphotyrosine modification is found at tyrosine 67. Residues serine 69, serine 71, serine 73, and serine 108 each carry the phosphoserine modification. A Phosphothreonine modification is found at threonine 110. Over residues 130–141 (RSTNSHLGTSNM) the composition is skewed to polar residues. At serine 156 the chain carries Phosphoserine. Residues threonine 161 and threonine 163 each carry the phosphothreonine modification. Phosphoserine is present on residues serine 164, serine 173, and serine 190. Over residues 234 to 246 (EEPKTKKARKDTE) the composition is skewed to basic and acidic residues. Serine 253 carries the post-translational modification Phosphoserine. Over residues 262–271 (EKHKYPHKVK) the composition is skewed to basic residues. Phosphoserine is present on residues serine 281 and serine 283. Basic and acidic residues predominate over residues 288 to 308 (SKYESSKESQQHSKSSADKIG). Phosphoserine is present on serine 312. Basic and acidic residues-rich tracts occupy residues 323–353 (KRKE…ETKT) and 362–376 (AKKE…EKKR). Serine 368 carries the post-translational modification Phosphoserine. Residues 402–492 (GAENCLEGLI…PGKKSKYEIA (91 aa)) enclose the BRCT domain. Basic and acidic residues-rich tracts occupy residues 496–507 (EMKKESKLERTP) and 520–538 (SKKE…RDSL). The disordered stretch occupies residues 496–538 (EMKKESKLERTPQKNVQGKRKISPSKKESESKKSRPTSKRDSL). Serine 537 bears the Phosphoserine mark. An ATP-binding site is contributed by 650-657 (SGPPGVGK). The disordered stretch occupies residues 1081–1148 (KASRHSTSPS…RKGKGKSSKK (68 aa)). Acidic residues predominate over residues 1094 to 1105 (EYNEELNEDDSQ). Residues serine 1104 and serine 1106 each carry the phosphoserine modification. The short motif at 1120–1124 (IKKKT) is the Nuclear localization signal element. Positions 1130 to 1140 (SKPEKDKEPRK) are enriched in basic and acidic residues.

This sequence belongs to the activator 1 large subunit family. Large subunit of the RFC complex, an heteropentameric complex consisting of RFC1 and four small subunits RFC2, RFC3, RFC4 and RFC5; the RFC complex interacts with PCNA and the interaction involves RFC1. Wide tissue distribution. Undetectable in placental tissue.

The protein localises to the nucleus. Functionally, subunit of the replication factor C (RFC) complex which acts during elongation of primed DNA templates by DNA polymerases delta and epsilon, and is necessary for ATP-dependent loading of proliferating cell nuclear antigen (PCNA) onto primed DNA. This subunit binds to the primer-template junction. Binds the PO-B transcription element as well as other GA rich DNA sequences. Can bind single- or double-stranded DNA. The sequence is that of Replication factor C subunit 1 (RFC1) from Homo sapiens (Human).